The sequence spans 423 residues: Ferrochelatase, mitochondrial (423 aa).

A mitochondrion-targeting transit peptide spans 1–40 (MIRFCPSCFALKRTAPVLNHTSRLGNYFNNTFSKFSVNRM). C200 serves as a coordination point for [2Fe-2S] cluster. D385 is an active-site residue. C405, C408, and C413 together coordinate [2Fe-2S] cluster.

It belongs to the ferrochelatase family. Monomer. [2Fe-2S] cluster is required as a cofactor.

The protein localises to the mitochondrion inner membrane. Its subcellular location is the cytoplasm. The protein resides in the nucleus. The enzyme catalyses heme b + 2 H(+) = protoporphyrin IX + Fe(2+). It participates in porphyrin-containing compound metabolism; protoheme biosynthesis; protoheme from protoporphyrin-IX: step 1/1. Catalyzes the ferrous insertion into protoporphyrin IX. The protein is Ferrochelatase, mitochondrial (hem15) of Schizosaccharomyces pombe (strain 972 / ATCC 24843) (Fission yeast).